Here is a 218-residue protein sequence, read N- to C-terminus: Probable WRKY transcription factor 12 (218 aa).

Residues 49–63 (SSLSSPSFPIHNSSS) show a composition bias toward low complexity. Disordered regions lie at residues 49 to 120 (SSLS…DMKN) and 199 to 218 (HNHI…LSSF). The span at 64–77 (TTTTHAPLGFSNNL) shows a compositional bias: polar residues. The span at 105 to 116 (SNSWWRSNSGSG) shows a compositional bias: low complexity. A DNA-binding region (WRKY) is located at residues 139–204 (SDVDVLDDGY…YEGRHNHIPS (66 aa)).

This sequence belongs to the WRKY group II-c family.

Its subcellular location is the nucleus. Its function is as follows. Transcription factor. Interacts specifically with the W box (5'-(T)TGAC[CT]-3'), a frequently occurring elicitor-responsive cis-acting element. The polypeptide is Probable WRKY transcription factor 12 (WRKY12) (Arabidopsis thaliana (Mouse-ear cress)).